The primary structure comprises 459 residues: Adenylosuccinate synthetase isozyme 1 C (459 aa).

The segment at 1–31 (MSFSWSAKDHKSYTNPPSNPTQGLKRPRNDT) is disordered. A compositionally biased stretch (polar residues) spans 13–22 (YTNPPSNPTQ). GTP contacts are provided by residues 44-50 (GDEGKGK) and 72-74 (GHT). The active-site Proton acceptor is the D45. The Mg(2+) site is built by D45 and G72. D45 provides a ligand contact to substrate. Residues 45 to 48 (DEGK), 70 to 73 (NAGH), T165, R179, N258, T273, and R337 each bind IMP. The Proton donor role is filled by H73. 333-339 (VTTGRKR) is a binding site for substrate. GTP contacts are provided by residues R339, 365-367 (KLD), and 447-450 (GVGK).

This sequence belongs to the adenylosuccinate synthetase family. Homodimer. Mg(2+) is required as a cofactor.

It is found in the cytoplasm. The catalysed reaction is IMP + L-aspartate + GTP = N(6)-(1,2-dicarboxyethyl)-AMP + GDP + phosphate + 2 H(+). It functions in the pathway purine metabolism; AMP biosynthesis via de novo pathway; AMP from IMP: step 1/2. Component of the purine nucleotide cycle (PNC), which interconverts IMP and AMP to regulate the nucleotide levels in various tissues, and which contributes to glycolysis and ammoniagenesis. Catalyzes the first committed step in the biosynthesis of AMP from IMP. The chain is Adenylosuccinate synthetase isozyme 1 C (adss1c) from Salmo salar (Atlantic salmon).